We begin with the raw amino-acid sequence, 233 residues long: Hydroxyacylglutathione hydrolase (233 aa).

The Zn(2+) site is built by His52, His54, Asp56, His57, His108, Asp125, and His163.

This sequence belongs to the metallo-beta-lactamase superfamily. Glyoxalase II family. In terms of assembly, monomer. The cofactor is Zn(2+).

The enzyme catalyses an S-(2-hydroxyacyl)glutathione + H2O = a 2-hydroxy carboxylate + glutathione + H(+). It participates in secondary metabolite metabolism; methylglyoxal degradation; (R)-lactate from methylglyoxal: step 2/2. Thiolesterase that catalyzes the hydrolysis of S-D-lactoyl-glutathione to form glutathione and D-lactic acid. The chain is Hydroxyacylglutathione hydrolase from Actinobacillus succinogenes (strain ATCC 55618 / DSM 22257 / CCUG 43843 / 130Z).